The primary structure comprises 178 residues: Interleukin-10 (178 aa).

Residues 1-18 (MPNPVLLYCLVLLAGMGT) form the signal peptide. 2 cysteine pairs are disulfide-bonded: Cys30–Cys126 and Cys80–Cys132. Asn134 carries N-linked (GlcNAc...) asparagine glycosylation.

Belongs to the IL-10 family. As to quaternary structure, homodimer. Interacts with IL10RA and IL10RB.

The protein resides in the secreted. In terms of biological role, major immune regulatory cytokine that acts on many cells of the immune system where it has profound anti-inflammatory functions, limiting excessive tissue disruption caused by inflammation. Mechanistically, IL10 binds to its heterotetrameric receptor comprising IL10RA and IL10RB leading to JAK1 and STAT2-mediated phosphorylation of STAT3. In turn, STAT3 translocates to the nucleus where it drives expression of anti-inflammatory mediators. Targets antigen-presenting cells (APCs) such as macrophages and monocytes and inhibits their release of pro-inflammatory cytokines including granulocyte-macrophage colony-stimulating factor /GM-CSF, granulocyte colony-stimulating factor/G-CSF, IL-1 alpha, IL-1 beta, IL-6, IL-8 and TNF-alpha. Also interferes with antigen presentation by reducing the expression of MHC-class II and co-stimulatory molecules, thereby inhibiting their ability to induce T cell activation. In addition, controls the inflammatory response of macrophages by reprogramming essential metabolic pathways including mTOR signaling. This is Interleukin-10 (IL10) from Marmota monax (Woodchuck).